Consider the following 190-residue polypeptide: MSENNGDNIELLSENDVARTIARIAHQIIEKTALDAPGTKPVLLLGIPSGGVPIASQIAQKIKEFTGVDVPVGSLDVTLYRDDLRKNPHRALQPTNLPLDGINGHHIILVDDVLYSGRTIRAALDALRDIGRPDIIQLAVLVDRGHRQLPIRADYVGKNLPTSRGEDVQVFIKEIDGRTAVVLTRGTEEA.

A PRPP-binding motif is present at residues 107–119; it reads IILVDDVLYSGRT.

It belongs to the purine/pyrimidine phosphoribosyltransferase family. PyrR subfamily.

It carries out the reaction UMP + diphosphate = 5-phospho-alpha-D-ribose 1-diphosphate + uracil. Its function is as follows. Regulates the transcription of the pyrimidine nucleotide (pyr) operon in response to exogenous pyrimidines. Functionally, also displays a weak uracil phosphoribosyltransferase activity which is not physiologically significant. This chain is Bifunctional protein PyrR, found in Corynebacterium diphtheriae (strain ATCC 700971 / NCTC 13129 / Biotype gravis).